A 1590-amino-acid polypeptide reads, in one-letter code: von Willebrand factor D and EGF domain-containing protein (1590 aa).

Positions 1–20 are cleaved as a signal peptide; it reads MPGGACVLVIALMFLAWGEA. N-linked (GlcNAc...) asparagine glycosylation occurs at Asn367. Residues 423–606 enclose the VWFD domain; sequence AYCYTFTDPH…EWRILPGKSM (184 aa). Intrachain disulfides connect Cys425/Cys565 and Cys468/Cys477. 2 N-linked (GlcNAc...) asparagine glycosylation sites follow: Asn703 and Asn968. The region spanning 1177–1216 is the EGF-like 1 domain; that stretch reads TVKSCDCLNGGSCVSDRNFSPGSGVYLCVCLPGFHGSLCE. Intrachain disulfides connect Cys1181–Cys1189, Cys1183–Cys1204, and Cys1206–Cys1215. Residues 1268 to 1280 show a composition bias toward basic and acidic residues; it reads DKSVNKEEDDKNA. The segment at 1268 to 1288 is disordered; that stretch reads DKSVNKEEDDKNAQGRKRHVK. EGF-like domains follow at residues 1294–1326, 1358–1390, 1422–1454, 1455–1486, 1518–1550, and 1551–1582; these read AFTI…SNCQ, DEEH…PRCE, STAL…EHCQ, NAFC…RRFQ, NTPI…VRCQ, and IPIC…VKCE. Cystine bridges form between Cys1298-Cys1308, Cys1302-Cys1314, Cys1316-Cys1325, Cys1362-Cys1372, Cys1366-Cys1378, Cys1380-Cys1389, Cys1426-Cys1436, Cys1430-Cys1442, Cys1444-Cys1453, Cys1458-Cys1468, Cys1462-Cys1474, Cys1522-Cys1532, Cys1526-Cys1538, Cys1540-Cys1549, Cys1554-Cys1564, Cys1558-Cys1570, and Cys1572-Cys1581.

The protein resides in the secreted. The polypeptide is von Willebrand factor D and EGF domain-containing protein (VWDE) (Homo sapiens (Human)).